Here is a 247-residue protein sequence, read N- to C-terminus: Orotidine 5'-phosphate decarboxylase (247 aa).

Residues Asp21, Lys43, 70–79 (DMKFHDIPNT), Thr129, Arg190, Gln199, Gly219, and Arg220 contribute to the substrate site. Lys72 acts as the Proton donor in catalysis.

The protein belongs to the OMP decarboxylase family. Type 1 subfamily. As to quaternary structure, homodimer.

It carries out the reaction orotidine 5'-phosphate + H(+) = UMP + CO2. It participates in pyrimidine metabolism; UMP biosynthesis via de novo pathway; UMP from orotate: step 2/2. Functionally, catalyzes the decarboxylation of orotidine 5'-monophosphate (OMP) to uridine 5'-monophosphate (UMP). In Chromobacterium violaceum (strain ATCC 12472 / DSM 30191 / JCM 1249 / CCUG 213 / NBRC 12614 / NCIMB 9131 / NCTC 9757 / MK), this protein is Orotidine 5'-phosphate decarboxylase.